A 301-amino-acid polypeptide reads, in one-letter code: GTPase Era (301 aa).

One can recognise an Era-type G domain in the interval 4 to 173; that stretch reads KAGFVALIGK…LECISQHLSP (170 aa). The interval 12 to 19 is G1; that stretch reads GKPNAGKS. A GTP-binding site is contributed by 12-19; it reads GKPNAGKS. Residues 38–42 form a G2 region; it reads NATRK. Positions 64–67 are G3; it reads DTPG. GTP-binding positions include 64–68 and 122–125; these read DTPGL and SKID. The tract at residues 122 to 125 is G4; sequence SKID. The interval 152–154 is G5; the sequence is LSA. The 77-residue stretch at 204-280 folds into the KH type-2 domain; it reads LSDEIPYESD…FLNLQVIAQK (77 aa).

This sequence belongs to the TRAFAC class TrmE-Era-EngA-EngB-Septin-like GTPase superfamily. Era GTPase family. Monomer.

It localises to the cytoplasm. Its subcellular location is the cell inner membrane. In terms of biological role, an essential GTPase that binds both GDP and GTP, with rapid nucleotide exchange. Plays a role in 16S rRNA processing and 30S ribosomal subunit biogenesis and possibly also in cell cycle regulation and energy metabolism. In Helicobacter pylori (strain ATCC 700392 / 26695) (Campylobacter pylori), this protein is GTPase Era.